The sequence spans 873 residues: Coatomer subunit gamma-2 (873 aa).

The segment covering 1-11 (MIKKFDKKDEE) has biased composition (basic and acidic residues). Residues 1 to 21 (MIKKFDKKDEESGSGSNPFQH) are disordered. HEAT repeat units follow at residues 64-101 (TEAT…ISED), 283-320 (RELA…KHPS), 321-355 (AVTA…GSES), 356-392 (SVDR…KYPR), 395-430 (SVMM…ENPE), and 467-504 (PTPS…QNDD).

The protein belongs to the COPG family. Oligomeric complex.

The protein resides in the cytoplasm. It is found in the golgi apparatus membrane. It localises to the cytoplasmic vesicle. The protein localises to the COPI-coated vesicle membrane. Functionally, the coatomer is a cytosolic protein complex that binds to dilysine motifs and reversibly associates with Golgi non-clathrin-coated vesicles, which further mediate biosynthetic protein transport from the ER, via the Golgi up to the trans Golgi network. Coatomer complex is required for budding from Golgi membranes, and is essential for the retrograde Golgi-to-ER transport of dilysine-tagged proteins. This Danio rerio (Zebrafish) protein is Coatomer subunit gamma-2 (copg2).